The chain runs to 1736 residues: Collagen alpha-2(XI) chain (1736 aa).

Residues 1–27 form the signal peptide; sequence MERCSRCHHLLLLVLLLLWLSAAPAWA. The region spanning 57–228 is the Laminin G-like domain; the sequence is DVAYRVSRPA…ESCDQKELEC (172 aa). The nonhelical region stretch occupies residues 215-486; that stretch reads QAAYESCDQK…ILQQARVALR (272 aa). 2 disordered regions span residues 229 to 465 and 485 to 1539; these read EGGW…DKGP and LRGP…SPGG. The span at 258–270 shows a compositional bias: polar residues; the sequence is PQNQEPQAQSTES. Over residues 363–376 the composition is skewed to low complexity; that stretch reads ALSAETARSEAAAR. 3 Collagen-like domains span residues 399–447, 487–545, and 546–587; these read GPPG…GPPG, GPPG…ADGA, and RGMP…PPGE. The segment covering 400–413 has biased composition (pro residues); sequence PPGPEGPAGFPGPP. The segment at 487 to 1500 is triple-helical region; it reads GPPGPMGYTG…PGHPGPPGEV (1014 aa). Over residues 515–533 the composition is skewed to low complexity; sequence DLGPQGPRGPQGLMGPPGK. Residues 615-624 show a composition bias toward pro residues; sequence KGPPGIPGPP. Low complexity predominate over residues 650–663; that stretch reads QQGTPGTQGLPGPQ. The segment covering 765–774 has biased composition (basic and acidic residues); the sequence is RGEDGPEGPK. The span at 842-861 shows a compositional bias: low complexity; sequence PTGPRGQRGPRGATGKSGAK. Gly residues predominate over residues 994-1003; sequence GTAGGPGLKG. Pro residues predominate over residues 1029–1040; it reads IGPPGRPGPQGP. 2 Collagen-like domains span residues 1072 to 1127 and 1128 to 1172; these read GPAG…ADGE and PGAR…ETGD. The segment covering 1115–1133 has biased composition (low complexity); it reads PVGQPGAAGADGEPGARGP. Residues 1176 to 1187 show a composition bias toward pro residues; sequence MGPPGPPGPRGP. Residues 1217–1230 are compositionally biased toward low complexity; that stretch reads ESGSPGVQGEPGVK. 2 stretches are compositionally biased toward basic and acidic residues: residues 1232–1241 and 1287–1296; these read PRGERGEKGE and DGAKGDRGED. 2 stretches are compositionally biased toward low complexity: residues 1341–1364 and 1376–1386; these read PGAV…KPGP and QQGRPGATGQA. Over residues 1388–1397 the composition is skewed to pro residues; that stretch reads PPGPVGPPGL. Residues 1413–1422 show a composition bias toward low complexity; the sequence is PGLIGLIGPP. The 56-residue stretch at 1444–1499 folds into the Collagen-like 6 domain; it reads GETGIPGASGPIGPGGPPGLPGPAGPKGAKGATGPAGPKGEKGVQGPPGHPGPPGE. Residues 1457-1467 show a composition bias toward pro residues; the sequence is PGGPPGLPGPA. The span at 1469-1481 shows a compositional bias: low complexity; it reads PKGAKGATGPAGP. Residues 1501–1736 constitute a propeptide, C-terminal propeptide; the sequence is IQPLPIQMPK…VLLGPVCFMG (236 aa). The Fibrillar collagen NC1 domain maps to 1541–1735; the sequence is EEIFGSLDSL…GVLLGPVCFM (195 aa). An intrachain disulfide couples Cys-1571 to Cys-1603. Residues Asp-1589, Asn-1591, Gln-1592, Cys-1594, and Asp-1597 each contribute to the Ca(2+) site. 2 N-linked (GlcNAc...) asparagine glycosylation sites follow: Asn-1604 and Asn-1650. 2 cysteine pairs are disulfide-bonded: Cys-1612/Cys-1733 and Cys-1655/Cys-1689.

The protein belongs to the fibrillar collagen family. As to quaternary structure, trimers composed of three different chains: alpha 1(XI), alpha 2(XI), and alpha 3(XI). Alpha 3(XI) is a post-translational modification of alpha 1(II). Alpha 1(V) can also be found instead of alpha 3(XI)=1(II). Post-translationally, prolines at the third position of the tripeptide repeating unit (G-X-Y) are hydroxylated in some or all of the chains.

The protein resides in the secreted. Its subcellular location is the extracellular space. It localises to the extracellular matrix. Functionally, may play an important role in fibrillogenesis by controlling lateral growth of collagen II fibrils. In Bos taurus (Bovine), this protein is Collagen alpha-2(XI) chain (COL11A2).